We begin with the raw amino-acid sequence, 517 residues long: GMP synthase [glutamine-hydrolyzing] (517 aa).

Residues 9 to 199 (RILILDFGSQ…VLNACGCEGL (191 aa)) form the Glutamine amidotransferase type-1 domain. The Nucleophile role is filled by Cys86. Residues His173 and Glu175 contribute to the active site. The GMPS ATP-PPase domain occupies 200 to 392 (WTSASIIEDA…LGLPYNMLYR (193 aa)). 227–233 (SGGVDSS) is an ATP binding site.

Homodimer.

The catalysed reaction is XMP + L-glutamine + ATP + H2O = GMP + L-glutamate + AMP + diphosphate + 2 H(+). It functions in the pathway purine metabolism; GMP biosynthesis; GMP from XMP (L-Gln route): step 1/1. Functionally, catalyzes the synthesis of GMP from XMP. This Vibrio atlanticus (strain LGP32) (Vibrio splendidus (strain Mel32)) protein is GMP synthase [glutamine-hydrolyzing].